We begin with the raw amino-acid sequence, 84 residues long: UPF0457 protein BCE33L2961 (84 aa).

Belongs to the UPF0457 family.

This Bacillus cereus (strain ZK / E33L) protein is UPF0457 protein BCE33L2961.